The sequence spans 1410 residues: Slit homolog 1 protein (1410 aa).

The N-terminal stretch at 1–16 (MLICFIFILLIPESAT) is a signal peptide. The region spanning 17 to 43 (CPAECVCVDRTVSCVGQQLTEVPQNIP) is the LRRNT 1 domain. LRR repeat units follow at residues 22 to 42 (VCVDRTVSCVGQQLTEVPQNI), 43 to 66 (PNDTIRLDLQDNEITKIGPNDFSS), 67 to 90 (LMNLKALQLMDNQIVTIHNQSFSS), 91 to 114 (LVFLQKLRLSRNRIRHLPDNVFQN), 116 to 138 (LKLTHLDLSENDITVVSDAQLQG), 140 to 162 (EFLEVLNLDKNHIFCLENNVISS), 163 to 186 (WVSLEVLTLNGNRLTTFEEPSNAR), 219 to 242 (TVCATPLNLQGSSIEILQDKFMTC), 286 to 309 (PPSTTEIRLEQNQISSIPSHSFKN), 310 to 333 (LKNLTRLDLSKNIITEIQPKAFLG), 335 to 357 (HNLHTLVLYGNNITDLKSDTFEG), 358 to 381 (LGSLQLLLLNANQLTCIRRGTFDH), 383 to 405 (PKLSMLSLYDNDIKSISEVTFQN), 407 to 430 (TSLSTLHLAKNPLICDCNLQWLAQ), 442 to 465 (ARCEQPKRLRKKKFATLPPNKFKC), 489 to 510 (CDCYGTTVDCNKRGLNTIPTSI), 511 to 535 (PRFATQLLLSGNNISTVDLNSNIHV), 536 to 559 (LENLEVLDLSNNHITFINDKSFEK), 561 to 583 (SKLRELRLNDNKLHHFSSMVLDE), and 585 to 607 (SNLEILDLSGNNIQCFSSIFFNK). Residues 195 to 243 (NPWNCDCRLRWMRKWLEKAEGQNKTVCATPLNLQGSSIEILQDKFMTCS) enclose the LRRCT 1 domain. Residues 259–286 (ICPLPCTCTGTTVDCRDSGLTYVPTNLP) enclose the LRRNT 2 domain. Positions 417–466 (NPLICDCNLQWLAQINLQKNIETSGARCEQPKRLRKKKFATLPPNKFKCK) constitute an LRRCT 2 domain. The region spanning 484 to 511 (ICPTQCDCYGTTVDCNKRGLNTIPTSIP) is the LRRNT 3 domain. An LRRCT 3 domain is found at 619-671 (NDLLCDCRILPLMSWLRSNSSHSIDIPPCQQFQYSDNESDKQRCAAFPEETCS). The LRRNT 4 domain maps to 677–703 (CPPKCSCLDRVVRCSNKNLTSFPSRIP). LRR repeat units lie at residues 681–703 (CSCLDRVVRCSNKNLTSFPSRIP), 704–726 (FDTTELYLDANYINEIPAHDLNR), 727–750 (LYSLTKLDLSHNRLISLENNTFSN), 752–774 (TRLSTLIISYNKLRCLQPLAFNG), 775–798 (LNALRILSLHGNDISFLPQSAFSN), and 800–823 (TSITHIAVGSNSLYCDCNMAWFSK). Residues 810–859 (NSLYCDCNMAWFSKWIKSKFIEAGIARCEYPNTVSNQLLLTAQPYQFTCD) enclose the LRRCT 4 domain. 2 consecutive EGF-like domains span residues 871-906 (DLCLNSPCKNNAICETTSSRKYTCNCTPGFYGVHCE) and 908-945 (QIDACYGSPCLNNATCKVAQAGRFNCYCNKGFEGDYCE). 18 disulfides stabilise this stretch: C873–C884, C878–C894, C896–C905, C912–C923, C917–C933, C935–C944, C951–C962, C956–C971, C973–C982, C989–C1002, C996–C1011, C1013–C1022, C1029–C1040, C1034–C1049, C1051–C1060, C1076–C1086, C1081–C1097, and C1099–C1108. One can recognise an EGF-like 1; calcium-binding domain in the interval 947–983 (NIDDCVNSKCENGGKCVDLINSYRCDCPMEYEGKHCE). Residues 985–1023 (KLEYCTKKLNPCENNGKCIPINGSYSCMCSPGFTGNNCE) enclose the EGF-like 3 domain. One can recognise an EGF-like 2; calcium-binding domain in the interval 1025-1061 (NIDDCKNVECQNGGSCVDGILSYDCLCRPGYAGQYCE). An EGF-like 4 domain is found at 1072 to 1109 (KTDACQQSACGQGECVASQNSSDFTCKCHEGFSGPSCD). Residues 1112–1285 (MSVGFKNPGA…LENVNTEQSC (174 aa)) form the Laminin G-like domain. An LRR 27 repeat occupies 1197–1221 (TSERKCFLQIDKNPVQIVENSGKSD). Disulfide bonds link C1259-C1285, C1292-C1302, C1297-C1314, C1316-C1325, C1332-C1368, C1346-C1382, C1357-C1398, and C1361-C1400. In terms of domain architecture, EGF-like 5 spans 1288-1326 (TVNFCAGIDCGNGKCTNNALSPKGYMCQCDSHFSGEHCD). The CTCK domain occupies 1332 to 1406 (CDKQKFRRHH…QCQCEPTKSV (75 aa)).

In terms of assembly, interacts with eva-1.

It localises to the secreted. Functions as a ligand for sax-3 receptor during larval development. Acts via the sax-3/Robo receptor to direct ventral axon guidance and guidance at the midline during embryonic development. The polypeptide is Slit homolog 1 protein (slt-1) (Caenorhabditis elegans).